Here is a 314-residue protein sequence, read N- to C-terminus: Glycerol-3-phosphate dehydrogenase [NAD(P)+] (314 aa).

3 residues coordinate NADPH: F11, R30, and K96. Sn-glycerol 3-phosphate-binding residues include K96, G124, and S126. NADPH is bound at residue A128. Residues K179, D232, S242, R243, and N244 each contribute to the sn-glycerol 3-phosphate site. K179 functions as the Proton acceptor in the catalytic mechanism. R243 serves as a coordination point for NADPH. E264 is an NADPH binding site.

It belongs to the NAD-dependent glycerol-3-phosphate dehydrogenase family.

The protein localises to the cytoplasm. The enzyme catalyses sn-glycerol 3-phosphate + NAD(+) = dihydroxyacetone phosphate + NADH + H(+). The catalysed reaction is sn-glycerol 3-phosphate + NADP(+) = dihydroxyacetone phosphate + NADPH + H(+). Its pathway is membrane lipid metabolism; glycerophospholipid metabolism. Functionally, catalyzes the reduction of the glycolytic intermediate dihydroxyacetone phosphate (DHAP) to sn-glycerol 3-phosphate (G3P), the key precursor for phospholipid synthesis. In Paracoccus denitrificans (strain Pd 1222), this protein is Glycerol-3-phosphate dehydrogenase [NAD(P)+].